The sequence spans 599 residues: Elongation factor 4 (599 aa).

The 183-residue stretch at 2 to 184 folds into the tr-type G domain; the sequence is KNIRNFSIIA…RLVRDIPPPE (183 aa). Residues 14 to 19 and 131 to 134 each bind GTP; these read DHGKST and NKID.

The protein belongs to the TRAFAC class translation factor GTPase superfamily. Classic translation factor GTPase family. LepA subfamily.

Its subcellular location is the cell inner membrane. The catalysed reaction is GTP + H2O = GDP + phosphate + H(+). Its function is as follows. Required for accurate and efficient protein synthesis under certain stress conditions. May act as a fidelity factor of the translation reaction, by catalyzing a one-codon backward translocation of tRNAs on improperly translocated ribosomes. Back-translocation proceeds from a post-translocation (POST) complex to a pre-translocation (PRE) complex, thus giving elongation factor G a second chance to translocate the tRNAs correctly. Binds to ribosomes in a GTP-dependent manner. This Escherichia coli O8 (strain IAI1) protein is Elongation factor 4.